The following is a 309-amino-acid chain: Polyprenal reductase (309 aa).

7 helical membrane-spanning segments follow: residues 12–32 (LPLYLLVSTLGLAISCCFTLI), 72–92 (FYAIGLLTLFICLHTVHSLIY), 114–134 (IPPITPSTSILALLLISLHVA), 151–171 (MNLFHYAVGIVHYIILPISIM), 184–204 (LHVSIDDISLTQWAGAVLFWI), 242–262 (LVSCPHFLFEICIYLSLFLVI), and 270–290 (FIIMFVCINQTFAALITHSWY).

It belongs to the steroid 5-alpha reductase family. Polyprenal reductase subfamily.

It is found in the endoplasmic reticulum membrane. The catalysed reaction is a di-trans,poly-cis-dolichal + NADP(+) = a di-trans,poly-cis-polyprenal + NADPH + H(+). The protein operates within protein modification; protein glycosylation. Plays a key role in early steps of protein N-linked glycosylation by being involved in the conversion of polyprenol into dolichol. Acts as a polyprenal reductase that mediates the reduction of polyprenal into dolichal in a NADP-dependent mechanism. Dolichols are required for the synthesis of dolichol-linked monosaccharides and the oligosaccharide precursor used for N-glycosylation. The protein is Polyprenal reductase of Caenorhabditis elegans.